The following is a 307-amino-acid chain: Elongation factor Ts (307 aa).

Residues 80–83 form an involved in Mg(2+) ion dislocation from EF-Tu region; that stretch reads TDFV.

It belongs to the EF-Ts family.

The protein resides in the cytoplasm. Its function is as follows. Associates with the EF-Tu.GDP complex and induces the exchange of GDP to GTP. It remains bound to the aminoacyl-tRNA.EF-Tu.GTP complex up to the GTP hydrolysis stage on the ribosome. The sequence is that of Elongation factor Ts from Bradyrhizobium sp. (strain ORS 278).